Consider the following 208-residue polypeptide: Single-stranded DNA-binding protein DdrA (208 aa).

The protein belongs to the RAD52 family. Homooligomer composed of 8 to 10 subunits; probably arranged in a ring-structure.

SsDNA-binding protein that contributes to the ionizing radiation resistance of D.radiodurans. Plays a role in DNA repair and genome reconstitution, in a RecA-independent process, since DdrA is essential for recovery from severe genomic fragmentation as a result of exposure to severe levels of ionizing radiation in an environment lacking nutrients. In vitro, binds to the 3'-ends of single-stranded DNA, protecting them from nuclease degradation. Thus, DdrA is part of a DNA end-protection system that helps to preserve genome integrity following irradiation or desiccation. Does not display DNA strand annealing activity, unlike eukaryotic Rad52 protein homologs. This chain is Single-stranded DNA-binding protein DdrA (ddrA), found in Deinococcus radiodurans (strain ATCC 13939 / DSM 20539 / JCM 16871 / CCUG 27074 / LMG 4051 / NBRC 15346 / NCIMB 9279 / VKM B-1422 / R1).